We begin with the raw amino-acid sequence, 154 residues long: Myoglobin (154 aa).

A Globin domain is found at 2–148; it reads GLSDGEWQLV…FRNDMATKYK (147 aa). A Phosphoserine modification is found at Ser4. Nitrite is bound at residue His65. His65 lines the O2 pocket. Position 94 (His94) interacts with heme b.

Belongs to the globin family. In terms of assembly, monomeric.

Its subcellular location is the cytoplasm. It localises to the sarcoplasm. The catalysed reaction is Fe(III)-heme b-[protein] + nitric oxide + H2O = Fe(II)-heme b-[protein] + nitrite + 2 H(+). The enzyme catalyses H2O2 + AH2 = A + 2 H2O. Functionally, monomeric heme protein which primary function is to store oxygen and facilitate its diffusion within muscle tissues. Reversibly binds oxygen through a pentacoordinated heme iron and enables its timely and efficient release as needed during periods of heightened demand. Depending on the oxidative conditions of tissues and cells, and in addition to its ability to bind oxygen, it also has a nitrite reductase activity whereby it regulates the production of bioactive nitric oxide. Under stress conditions, like hypoxia and anoxia, it also protects cells against reactive oxygen species thanks to its pseudoperoxidase activity. The sequence is that of Myoglobin (MB) from Tachyglossus aculeatus aculeatus (Southeast Australian short-beaked echidna).